Consider the following 133-residue polypeptide: Meiotically up-regulated gene 15 protein (133 aa).

It is found in the cytoplasm. Its subcellular location is the nucleus. In terms of biological role, has a role in meiosis. The chain is Meiotically up-regulated gene 15 protein (mug15) from Schizosaccharomyces pombe (strain 972 / ATCC 24843) (Fission yeast).